Reading from the N-terminus, the 200-residue chain is CASP-like protein 1D2 (200 aa).

Positions 1–26 (MASTENPDPETGKSEPIPASATTPPP) are disordered. The Cytoplasmic portion of the chain corresponds to 1–36 (MASTENPDPETGKSEPIPASATTPPPSAASFLDCRK). A helical membrane pass occupies residues 37–57 (IDVIIRVLLFSATLTALIVMV). The Extracellular portion of the chain corresponds to 58-85 (TSDQTEKTQLPGVSSPAPVSAEFNDSPA). The helical transmembrane segment at 86–106 (FIFFVVALVVTSFYALMSTLV) threads the bilayer. Over 107–129 (SISLLLKPEFTARVSVYLASLDM) the chain is Cytoplasmic. A helical transmembrane segment spans residues 130–150 (VMLGILASATGTAGGVAYIAL). Topologically, residues 151-171 (KGNKEVGWNKICNVYDKFCRY) are extracellular. The helical transmembrane segment at 172–192 (IATSLALSLFATLLLLVLSIC) threads the bilayer. The Cytoplasmic portion of the chain corresponds to 193-200 (SALSKRTP).

The protein belongs to the Casparian strip membrane proteins (CASP) family. Homodimer and heterodimers.

The protein localises to the cell membrane. The chain is CASP-like protein 1D2 from Arabidopsis lyrata subsp. lyrata (Lyre-leaved rock-cress).